Here is a 247-residue protein sequence, read N- to C-terminus: ATP synthase subunit a, chloroplastic (247 aa).

A run of 5 helical transmembrane segments spans residues 38-58 (QVLI…ALAV), 95-115 (VPFI…GALL), 134-154 (INTT…AGLT), 199-219 (LVVV…VMFL), and 220-240 (GLFT…AYIG).

It belongs to the ATPase A chain family. As to quaternary structure, F-type ATPases have 2 components, CF(1) - the catalytic core - and CF(0) - the membrane proton channel. CF(1) has five subunits: alpha(3), beta(3), gamma(1), delta(1), epsilon(1). CF(0) has four main subunits: a, b, b' and c.

The protein localises to the plastid. Its subcellular location is the chloroplast thylakoid membrane. Key component of the proton channel; it plays a direct role in the translocation of protons across the membrane. The sequence is that of ATP synthase subunit a, chloroplastic from Helianthus annuus (Common sunflower).